A 244-amino-acid polypeptide reads, in one-letter code: Glucosamine-6-phosphate deaminase (244 aa).

The Proton acceptor; for enolization step role is filled by D67. N136 acts as the For ring-opening step in catalysis. The active-site Proton acceptor; for ring-opening step is H138. The For ring-opening step role is filled by E143.

Belongs to the glucosamine/galactosamine-6-phosphate isomerase family. NagB subfamily.

It carries out the reaction alpha-D-glucosamine 6-phosphate + H2O = beta-D-fructose 6-phosphate + NH4(+). The protein operates within amino-sugar metabolism; N-acetylneuraminate degradation; D-fructose 6-phosphate from N-acetylneuraminate: step 5/5. Its function is as follows. Catalyzes the reversible isomerization-deamination of glucosamine 6-phosphate (GlcN6P) to form fructose 6-phosphate (Fru6P) and ammonium ion. This Clostridium botulinum (strain Loch Maree / Type A3) protein is Glucosamine-6-phosphate deaminase.